Consider the following 348-residue polypeptide: CCAAT/enhancer-binding protein beta (348 aa).

Positions methionine 1 to methionine 24 are required for Lys-174 sumoylation. Position 3 is an asymmetric dimethylarginine; by CARM1 (arginine 3). The segment at methionine 24–alanine 135 is required for MYC transcriptional repression. Lysine 43 is modified (N6-acetyllysine; alternate). An N6-methylated lysine; alternate modification is found at lysine 43. Disordered stretches follow at residues alanine 44–serine 65 and leucine 79–glycine 112. Residues alanine 47–proline 59 show a composition bias toward pro residues. Residues aspartate 116 to aspartate 124 carry the 9aaTAD motif. Lysine 129 and lysine 132 each carry N6-acetyllysine; by KAT2A and KAT2B. Position 133 is an N6-acetyllysine; by KAT2A and KAT2B; alternate (lysine 133). Residue lysine 133 forms a Glycyl lysine isopeptide (Lys-Gly) (interchain with G-Cter in SUMO2); alternate linkage. The tract at residues alanine 158 to glycine 178 is disordered. Over residues leucine 160–alanine 171 the composition is skewed to pro residues. A Glycyl lysine isopeptide (Lys-Gly) (interchain with G-Cter in SUMO2); alternate cross-link involves residue lysine 174. Residue lysine 174 forms a Glycyl lysine isopeptide (Lys-Gly) (interchain with G-Cter in SUMO); alternate linkage. Glycyl lysine isopeptide (Lys-Gly) (interchain with G-Cter in SUMO2) cross-links involve residues lysine 185 and lysine 187. Over residues serine 219–proline 259 the composition is skewed to low complexity. The disordered stretch occupies residues serine 219–tyrosine 277. Threonine 227 carries the phosphothreonine; by GSK3-beta modification. O-linked (GlcNAc) serine glycosylation is found at serine 228 and serine 229. The residue at position 232 (serine 232) is a Phosphoserine; by GSK3-beta. Threonine 236 is subject to Phosphothreonine; by RPS6KA1, CDK2 and MAPK. Glycyl lysine isopeptide (Lys-Gly) (interchain with G-Cter in SUMO2) cross-links involve residues lysine 263 and lysine 265. Positions lysine 268 to tyrosine 277 are enriched in basic and acidic residues. Residue threonine 269 is modified to Phosphothreonine; by RPS6KA1 and PKC/PRKCA. Residues serine 274–leucine 337 form the bZIP domain. The tract at residues lysine 278–arginine 298 is basic motif. Serine 291 carries the phosphoserine; by PKC/PRKCA modification. The interval leucine 300–leucine 307 is leucine-zipper. Serine 328 is modified (phosphoserine; by CaMK2). Lysine 335 is covalently cross-linked (Glycyl lysine isopeptide (Lys-Gly) (interchain with G-Cter in SUMO2)).

Belongs to the bZIP family. C/EBP subfamily. As to quaternary structure, binds DNA as a homodimer and as a heterodimer. Interacts with ATF4. Binds DNA as a heterodimer with ATF4. Interacts with MYB; within the complex, MYB and CEBPB bind to different promoter regions. Can form stable heterodimers with CEBPA, CEBPD and CEBPG. Interacts with SIX1. Interacts with TRIM28 and PTGES2. Interacts with PRDM16. Interacts with CCDC85B. Forms a complex with THOC5. Interacts with ZNF638; this interaction increases transcriptional activation. Interacts with CIDEA and CIDEC; these interactions increase transcriptional activation of a subset of CEBPB downstream target genes. Interacts with DDIT3/CHOP. Interacts with EP300; recruits EP300 to chromatin. Interacts with RORA; the interaction disrupts interaction with EP300. Interacts (not methylated) with MED23, MED26, SMARCA2, SMARCB1 and SMARCC1. Interacts with KAT2A and KAT2B. Interacts with ATF5; EP300 is required for ATF5 and CEBPB interaction and DNA binding. Interacts with NFE2L1; the heterodimer represses expression of DSPP during odontoblast differentiation. Post-translationally, methylated. Methylation at Arg-3 by CARM1 and at Lys-43 by EHMT2 inhibit transactivation activity. Methylation is probably inhibited by phosphorylation at Thr-236. In terms of processing, sumoylated by polymeric chains of SUMO2 or SUMO3. Sumoylation at Lys-174 is required for inhibition of T-cells proliferation. In adipocytes, sumoylation at Lys-174 by PIAS1 leads to ubiquitination and subsequent proteasomal degradation. Desumoylated by SENP2, which abolishes ubiquitination and stabilizes protein levels. Ubiquitinated, leading to proteasomal degradation. Post-translationally, phosphorylated at Thr-236 by MAPK and CDK2, serves to prime phosphorylation at Thr-227 and Ser-232 by GSK3B and acquire DNA-binding as well as transactivation activities, required to induce adipogenesis. MAPK and CDK2 act sequentially to maintain Thr-236 in the primed phosphorylated state during mitotical cloning expansion and thereby progression of terminal differentiation. Phosphorylation at Thr-269 enhances transactivation activity. Phosphorylation at Ser-328 in response to calcium increases transactivation activity. Phosphorylated at Thr-236 by RPS6KA1. In terms of processing, O-glycosylated, glycosylation at Ser-228 and Ser-229 prevents phosphorylation on Thr-236, Ser-232 and Thr-227 and DNA binding activity which delays the adipocyte differentiation program. Acetylated. Acetylation at Lys-43 is an important and dynamic regulatory event that contributes to its ability to transactivate target genes, including those associated with adipogenesis and adipocyte function. Deacetylation by HDAC1 represses its transactivation activity. Acetylated by KAT2A and KAT2B within a cluster of lysine residues between amino acids 129-133, this acetylation is strongly induced by glucocorticoid treatment and enhances transactivation activity.

The protein localises to the nucleus. It localises to the cytoplasm. In terms of biological role, important transcription factor regulating the expression of genes involved in immune and inflammatory responses. Also plays a significant role in adipogenesis, as well as in the gluconeogenic pathway, liver regeneration, and hematopoiesis. The consensus recognition site is 5'-T[TG]NNGNAA[TG]-3'. Its functional capacity is governed by protein interactions and post-translational protein modifications. During early embryogenesis, plays essential and redundant roles with CEBPA. Has a promitotic effect on many cell types such as hepatocytes and adipocytes but has an antiproliferative effect on T-cells by repressing MYC expression, facilitating differentiation along the T-helper 2 lineage. Binds to regulatory regions of several acute-phase and cytokines genes and plays a role in the regulation of acute-phase reaction and inflammation. Also plays a role in intracellular bacteria killing. During adipogenesis, is rapidly expressed and, after activation by phosphorylation, induces CEBPA and PPARG, which turn on the series of adipocyte genes that give rise to the adipocyte phenotype. The delayed transactivation of the CEBPA and PPARG genes by CEBPB appears necessary to allow mitotic clonal expansion and thereby progression of terminal differentiation. Essential for female reproduction because of a critical role in ovarian follicle development. Restricts osteoclastogenesis: together with NFE2L1; represses expression of DSPP during odontoblast differentiation. The chain is CCAAT/enhancer-binding protein beta (CEBPB) from Bos taurus (Bovine).